A 252-amino-acid polypeptide reads, in one-letter code: Sororin (252 aa).

Disordered stretches follow at residues 1-48 and 72-142; these read MSGR…WPKT and AVQS…SKKV. Phosphoserine occurs at positions 21, 33, 35, 75, 79, and 83. Basic and acidic residues predominate over residues 86 to 104; the sequence is LEKENEPPGRELTKEDLFK. Positions 88-90 match the KEN box motif; it reads KEN. The residue at position 98 (Thr98) is a Phosphothreonine. Residues 105–116 are compositionally biased toward low complexity; the sequence is THSVPATPTSTP. Residue Ser107 is modified to Phosphoserine. 2 positions are modified to phosphothreonine: Thr111 and Thr115. Residues 124-140 show a composition bias toward basic and acidic residues; it reads SSSKEGELDARDLEMSK. Ser154 carries the phosphoserine modification. At Thr159 the chain carries Phosphothreonine. An FGF motif motif is present at residues 166-168; that stretch reads FGF. A disordered region spans residues 199-222; it reads WAPDMTLPGISPPPEKQKRKKKKM. A Phosphoserine modification is found at Ser209. The tract at residues 230–252 is C-terminal Sororin domain; sequence LDEWAAAMNAEFEAAEQFDLLVE.

Belongs to the sororin family. As to quaternary structure, interacts with the APC/C complex. Interacts with the chromatin-bound cohesin complex; the interaction is indirect, occurs after DNA replication and requires acetylation of the cohesin component SMC3. Interacts (via the FGF motif) with PDS5A and PDS5B; the interaction is direct and prevents the interaction of PDS5A with WAPL. Post-translationally, phosphorylated. Phosphorylation, as cells enter mitosis, disrupts the interaction with PDS5A and relieves the inhibition of WAPL by CDCA5. In terms of processing, ubiquitinated by the APC/C complex in G1, leading to its degradation.

The protein localises to the nucleus. The protein resides in the chromosome. Its subcellular location is the cytoplasm. Functionally, regulator of sister chromatid cohesion in mitosis stabilizing cohesin complex association with chromatin. May antagonize the action of WAPL which stimulates cohesin dissociation from chromatin. Cohesion ensures that chromosome partitioning is accurate in both meiotic and mitotic cells and plays an important role in DNA repair. Required for efficient DNA double-stranded break repair. The sequence is that of Sororin (CDCA5) from Homo sapiens (Human).